We begin with the raw amino-acid sequence, 193 residues long: Acyl carrier protein phosphodiesterase (193 aa).

Belongs to the AcpH family.

It carries out the reaction holo-[ACP] + H2O = apo-[ACP] + (R)-4'-phosphopantetheine + H(+). In terms of biological role, converts holo-ACP to apo-ACP by hydrolytic cleavage of the phosphopantetheine prosthetic group from ACP. This chain is Acyl carrier protein phosphodiesterase, found in Salmonella dublin (strain CT_02021853).